The primary structure comprises 134 residues: Small ribosomal subunit protein uS11 (134 aa).

Disordered regions lie at residues 1-22 (MPPKGRQGAAKKVRRKEKKNVA) and 114-134 (SIQDVTPTPHNGCRPPKRRRV). Residues 9-22 (AAKKVRRKEKKNVA) are compositionally biased toward basic residues.

This sequence belongs to the universal ribosomal protein uS11 family. In terms of assembly, part of the 30S ribosomal subunit. Interacts with proteins S7 and S18. Binds to IF-3.

Its function is as follows. Located on the platform of the 30S subunit, it bridges several disparate RNA helices of the 16S rRNA. Forms part of the Shine-Dalgarno cleft in the 70S ribosome. The protein is Small ribosomal subunit protein uS11 of Streptomyces coelicolor (strain ATCC BAA-471 / A3(2) / M145).